A 365-amino-acid chain; its full sequence is MASTSAASNELVSSTINTILPTLVDGLDLNQRQSHDFFQQVLQGNIDPALMASVLTALKIKGETPEEIAGAAIAIRAAATPFPERNKEDIVADCVGTGGDGANTINISTTAAVLAAACGLKMAKHGNRSVSSMSGSADLLEAFGVNLSMSPETANHCLAQTNLCFLYAPAYHSGFKYAGPVRKAMGIRTLFNILGPLVNPAKPNIMLLGVYTPELLMPMAQALQLTGVKRAFVVHGSGLDEIALHGNTQAIEINNGELIERTISPQDFGLKNYTLEEIKGGTPAENADIIRDILSGQGKDAHNAAVIVNCAALLYLHDKAESLTQAAQLATEVLASGKGLSTLLTLVKLSNQDVSSTQTELKADK.

5-phospho-alpha-D-ribose 1-diphosphate-binding positions include G96, 99–100 (GD), T104, 106–109 (NIST), 124–132 (KHGNRSVSS), and S136. An anthranilate-binding site is contributed by G96. S108 contacts Mg(2+). N127 is an anthranilate binding site. Anthranilate is bound at residue R182. 2 residues coordinate Mg(2+): D240 and E241.

The protein belongs to the anthranilate phosphoribosyltransferase family. In terms of assembly, homodimer. Mg(2+) is required as a cofactor.

It catalyses the reaction N-(5-phospho-beta-D-ribosyl)anthranilate + diphosphate = 5-phospho-alpha-D-ribose 1-diphosphate + anthranilate. It functions in the pathway amino-acid biosynthesis; L-tryptophan biosynthesis; L-tryptophan from chorismate: step 2/5. Catalyzes the transfer of the phosphoribosyl group of 5-phosphorylribose-1-pyrophosphate (PRPP) to anthranilate to yield N-(5'-phosphoribosyl)-anthranilate (PRA). This chain is Anthranilate phosphoribosyltransferase, found in Colwellia psychrerythraea (strain 34H / ATCC BAA-681) (Vibrio psychroerythus).